A 364-amino-acid polypeptide reads, in one-letter code: Aminomethyltransferase (364 aa).

Belongs to the GcvT family. In terms of assembly, the glycine cleavage system is composed of four proteins: P, T, L and H.

The catalysed reaction is N(6)-[(R)-S(8)-aminomethyldihydrolipoyl]-L-lysyl-[protein] + (6S)-5,6,7,8-tetrahydrofolate = N(6)-[(R)-dihydrolipoyl]-L-lysyl-[protein] + (6R)-5,10-methylene-5,6,7,8-tetrahydrofolate + NH4(+). Functionally, the glycine cleavage system catalyzes the degradation of glycine. The protein is Aminomethyltransferase of Escherichia coli O81 (strain ED1a).